The sequence spans 203 residues: Protein-methionine-sulfoxide reductase heme-binding subunit MsrQ (203 aa).

The next 6 membrane-spanning stretches (helical) occupy residues 10 to 30 (IFVL…MGLL), 37 to 57 (IMMD…LSMT), 75 to 95 (LGLW…VFIL), 110 to 130 (PYII…VTSN), 147 to 167 (LVYV…RSDL), and 169 to 189 (EWAI…PPVW).

Belongs to the MsrQ family. Heterodimer of a catalytic subunit (MsrP) and a heme-binding subunit (MsrQ). FMN serves as cofactor. Requires heme b as cofactor.

Its subcellular location is the cell inner membrane. Part of the MsrPQ system that repairs oxidized periplasmic proteins containing methionine sulfoxide residues (Met-O), using respiratory chain electrons. Thus protects these proteins from oxidative-stress damage caused by reactive species of oxygen and chlorine generated by the host defense mechanisms. MsrPQ is essential for the maintenance of envelope integrity under bleach stress, rescuing a wide series of structurally unrelated periplasmic proteins from methionine oxidation. MsrQ provides electrons for reduction to the reductase catalytic subunit MsrP, using the quinone pool of the respiratory chain. In Pseudomonas entomophila (strain L48), this protein is Protein-methionine-sulfoxide reductase heme-binding subunit MsrQ.